Here is a 4008-residue protein sequence, read N- to C-terminus: Extracellular matrix organizing protein FRAS1 (4008 aa).

A signal peptide spans 1-26; it reads MGVLKVWLGLALALAEFAVLPHHSEG. 5 consecutive VWFC domains span residues 27–88, 93–153, 157–217, 219–279, and 283–343; these read ACVY…PECV, GSCH…PVCV, KPCS…PQCS, RSCS…EECV, and GSCS…PECI. At 27–3901 the chain is on the extracellular side; the sequence is ACVYQDSLLA…AASLSQTGAS (3875 aa). At Ser344 the chain carries Phosphoserine. Positions 347–417 constitute a VWFC 6 domain; that stretch reads GYCVYEETGE…VKGQCCPDCT (71 aa). Asn361 carries an N-linked (GlcNAc...) asparagine glycan. 14 FU repeats span residues 409 to 460, 462 to 505, 507 to 553, 555 to 599, 602 to 647, 649 to 705, 708 to 753, 755 to 800, 803 to 852, 854 to 900, 903 to 948, 952 to 997, 999 to 1042, and 1046 to 1089; these read KGQC…GFYQ, GSLC…GFYQ, RHSC…GFYN, QGTC…GYYA, TGRC…GFYS, HGVC…HFYL, TGIC…GYFH, EGSC…EQFL, VGYC…GYYA, RGAC…GHYL, NHVC…QYYL, TNTC…SFYQ, SGLC…GYFA, and KHKC…GFSV. A glycan (N-linked (GlcNAc...) asparagine) is linked at Asn728. Asn1093 and Asn1108 each carry an N-linked (GlcNAc...) asparagine glycan. CSPG repeat units lie at residues 1102-1197, 1217-1308, 1329-1438, 1463-1559, 1595-1689, 1710-1810, and 1833-1936; these read TPSL…LKIS, APYV…LQAN, GLQL…FEVS, APKV…FSFA, PVFQ…ISVT, GPRL…FSVS, and PPVI…FYVS. N-linked (GlcNAc...) asparagine glycosylation occurs at Asn1504. Asn1777 carries N-linked (GlcNAc...) asparagine glycosylation. Residues Asn1948 and Asn1978 are each glycosylated (N-linked (GlcNAc...) asparagine). 5 CSPG repeats span residues 1957-2057, 2078-2177, 2199-2291, 2311-2404, and 2439-2536; these read EPPR…FSLT, TPHL…FDVV, PPVI…FTLS, SLPV…FTVS, and TPRI…FLVK. Calx-beta domains follow at residues 2543–2646, 2659–2770, 2784–2890, 2905–3007, and 3025–3129; these read VSDN…VELS, AKVI…IALA, AKVL…VFLS, IAIN…VYLG, and ATIT…LVLG. Asn2563, Asn2664, and Asn2682 each carry an N-linked (GlcNAc...) asparagine glycan. Asn2908, Asn2985, Asn3070, Asn3218, Asn3676, and Asn3875 each carry an N-linked (GlcNAc...) asparagine glycan. The chain crosses the membrane as a helical span at residues 3902–3922; it reads IGSALAAIMLLLLVFLVACFI. Topologically, residues 3923–4008 are cytoplasmic; it reads NRKCQKQRKK…HNNLQDGTEV (86 aa).

It belongs to the FRAS1 family. As to expression, expressed in many adult tissues, with highest levels in kidney, pancreas and thalamus. Relatively high expression was also detected in fetal kidney and heart.

Its subcellular location is the cell membrane. Its function is as follows. Involved in extracellular matrix organization. Required for the regulation of epidermal-basement membrane adhesion responsible for proper organogenesis during embryonic development. Involved in brain organization and function. In Homo sapiens (Human), this protein is Extracellular matrix organizing protein FRAS1.